Here is a 279-residue protein sequence, read N- to C-terminus: Syntaxin-21 (279 aa).

The tract at residues 1-34 is disordered; the sequence is MSFQDLEAGTRSPAPNRFTGGRQQRPSSRGDPSQ. Position 2 is an N-acetylserine (Ser-2). The Cytoplasmic portion of the chain corresponds to 2–258; sequence SFQDLEAGTR…AKTQRSNSSL (257 aa). Residues 21–31 are compositionally biased toward polar residues; sequence GRQQRPSSRGD. Residues 65–94 are a coiled coil; that stretch reads ELRDKLQKTRLQISELVKNTSAKLKEASEA. In terms of domain architecture, t-SNARE coiled-coil homology spans 186–248; sequence EAIIEEREQG…TQATVQLRKA (63 aa). Residues 259-279 traverse the membrane as a helical; Anchor for type IV membrane protein segment; the sequence is TCLLILIFGIVLLIVIIVVLV.

The protein belongs to the syntaxin family. In terms of assembly, interacts with VTI11 and SYP51 to form a t-SNARE complex and with alpha-SNAP to form a 20S complex. As to expression, a high level expression is seen in the roots while a low level expression is seen in the leaves.

It localises to the prevacuolar compartment membrane. In terms of biological role, may function in the docking or fusion of transport vesicles with the prevacuolar membrane. In Arabidopsis thaliana (Mouse-ear cress), this protein is Syntaxin-21 (SYP21).